The following is a 155-amino-acid chain: MSAAVKPLQIKILDPRLGTVWPLPTYATEASAGLDLRAALDAPMTLVPGDAELLSTGIAIHLVDPSLCAVVLPRSGLGHRHGIVLGNGTGLIDSDYQGPLLVSLWNRGREAFTIEPGDRIAQLVVLPIVRVVLQVVDTFVESGRGAGGFGHTGVR.

Substrate is bound by residues 74–76 (RSG), Asn87, and 91–93 (LID).

This sequence belongs to the dUTPase family. Requires Mg(2+) as cofactor.

The catalysed reaction is dUTP + H2O = dUMP + diphosphate + H(+). It functions in the pathway pyrimidine metabolism; dUMP biosynthesis; dUMP from dCTP (dUTP route): step 2/2. In terms of biological role, this enzyme is involved in nucleotide metabolism: it produces dUMP, the immediate precursor of thymidine nucleotides and it decreases the intracellular concentration of dUTP so that uracil cannot be incorporated into DNA. The chain is Deoxyuridine 5'-triphosphate nucleotidohydrolase from Xylella fastidiosa (strain M12).